A 78-amino-acid polypeptide reads, in one-letter code: MFKKSVLFATLLSGVMAFSTNADDKIILKHISVSSVSASPTVLEDTIADIARKYNASSWKVTSMRIDNNSTATAVLYK.

Positions 1–22 (MFKKSVLFATLLSGVMAFSTNA) are cleaved as a signal peptide.

It belongs to the BhsA/McbA family.

It is found in the periplasm. In terms of biological role, probably involved in reactive chlorine species (RCS) stress resistance. This is an uncharacterized protein from Escherichia coli (strain K12).